The following is a 322-amino-acid chain: MVTVFDAVSDRAQRVRHPEKAHRPDTEVLRKPDWIRVKAPTSKGYQETRSIVKSHKLVTVCEEAGCPNIGECWDKKHATFMIMGEICTRACAFCNVATGKPNALDLDEPANVAKAVKQMGLSHVVITSVDRDDLDDGGAEHFEKVIFAIREASPETTIEILTPDFLRKPGALERVVAAKPDVINHNLETVPSNYLTVRPGARYFHSIRLLQRVKELDPTMFTKSGIMVGLGEERNEVLQLMDDLRTADVDFLTIGQYLQPSRKHHKVEKFVTPEEFKSYETVAYTKGFLMVSSSPLTRSSHHAGDDFARLKAARERKLAAAE.

[4Fe-4S] cluster is bound by residues C61, C66, C72, C87, C91, C94, and S300. A Radical SAM core domain is found at 73–289 (WDKKHATFMI…ETVAYTKGFL (217 aa)).

The protein belongs to the radical SAM superfamily. Lipoyl synthase family. The cofactor is [4Fe-4S] cluster.

The protein localises to the cytoplasm. It carries out the reaction [[Fe-S] cluster scaffold protein carrying a second [4Fe-4S](2+) cluster] + N(6)-octanoyl-L-lysyl-[protein] + 2 oxidized [2Fe-2S]-[ferredoxin] + 2 S-adenosyl-L-methionine + 4 H(+) = [[Fe-S] cluster scaffold protein] + N(6)-[(R)-dihydrolipoyl]-L-lysyl-[protein] + 4 Fe(3+) + 2 hydrogen sulfide + 2 5'-deoxyadenosine + 2 L-methionine + 2 reduced [2Fe-2S]-[ferredoxin]. The protein operates within protein modification; protein lipoylation via endogenous pathway; protein N(6)-(lipoyl)lysine from octanoyl-[acyl-carrier-protein]: step 2/2. Its function is as follows. Catalyzes the radical-mediated insertion of two sulfur atoms into the C-6 and C-8 positions of the octanoyl moiety bound to the lipoyl domains of lipoate-dependent enzymes, thereby converting the octanoylated domains into lipoylated derivatives. The sequence is that of Lipoyl synthase from Rhizobium meliloti (strain 1021) (Ensifer meliloti).